Reading from the N-terminus, the 218-residue chain is uncharacterized protein (218 aa).

5 consecutive transmembrane segments (helical) span residues 19–39, 92–112, 124–144, 161–181, and 196–216; these read VFGF…FTII, FDYA…VSAV, YGLI…MILA, LLFE…IAPF, and YILM…EILL.

The protein localises to the cell membrane. This is an uncharacterized protein from Methanocaldococcus jannaschii (strain ATCC 43067 / DSM 2661 / JAL-1 / JCM 10045 / NBRC 100440) (Methanococcus jannaschii).